Consider the following 381-residue polypeptide: Homoserine O-succinyltransferase (381 aa).

Residues 45 to 360 (NAVLVCHALN…PHGHDAFLLD (316 aa)) enclose the AB hydrolase-1 domain. The active-site Nucleophile is serine 151. Residue arginine 221 coordinates substrate. Residues aspartate 321 and histidine 354 contribute to the active site. Residue aspartate 355 coordinates substrate.

Belongs to the AB hydrolase superfamily. MetX family. Homodimer.

It is found in the cytoplasm. It carries out the reaction L-homoserine + succinyl-CoA = O-succinyl-L-homoserine + CoA. It participates in amino-acid biosynthesis; L-methionine biosynthesis via de novo pathway; O-succinyl-L-homoserine from L-homoserine: step 1/1. Transfers a succinyl group from succinyl-CoA to L-homoserine, forming succinyl-L-homoserine. This is Homoserine O-succinyltransferase from Burkholderia multivorans (strain ATCC 17616 / 249).